The sequence spans 873 residues: MAEMEKEGRPPENKRSRKPAHPVKREINEEMKNFAENTMNELLGWYGYDKVELKDGEDIEFRSYPTDGESRQHISVLKENSLPKPKLPEDSVISPYNISTGYSGLATGNGLSDSPAGSKDHGSVPIIVPLIPPPFIKPPAEDDVSNVQIMCAWCQKVGIKRYSLSMGSEVKSFCSEKCFAACRRAYFKRNKARDEDGHAENFPQQHYAKETPRLAFKNNCELLVCDWCKHIRHTKEYLDFGDGERRLQFCSAKCLNQYKMDIFYKETQANLPAGLCSTLHPPMENKAEGTGVQLLTPDSWNIPLTDARRKAPSPVATAGQSQGPGPSASTTVSPSDTANCSVTKIPTPVPKSIPISETPNIPPVSVQPPASIGPPLGVPPRSPPMVMTNRGPVPLPIFMEQQIMQQIRPPFIRGPPHHASNPNSPLSNPMLPGIGPPPGGPRNLGPTSSPMHRPMLSPHIHPPSTPTMPGNPPGLLPPPPPGAPLPSLPFPPVSMMPNGPMPVPQMMNFGLPSLAPLVPPPTLLVPYPVIVPLPVPIPIPIPIPHVSDSKPPNGFSSNGENFIPNAPGDSAAAGGKPSGHSLSPRDSKQGSSKSADSPPGCSGQALSLAPTPAEHGRSEVVDLTRRAGSPPGPPGAGGQLGFPGVLQGPQDGVIDLTVGHRARLHNVIHRALHAHVKAEREPSAAERRTCGGCRDGHCSPPAAGDPGPGAPAGPEAAAACNVIVNGTRGAAAEGAKSAEPPPEQPPPPPPPAPPKKLLSPEEPAVSELESVKENNCASNCHLDGEAAKKLMGEEALAGGDKSDPNLNNPADEDHAYALRMLPKTGCVIQPVPKPAEKAAMAPCIISSPMLSAGPEDLEPPLKRRCLRIRNQNK.

Residues 1 to 14 show a composition bias toward basic and acidic residues; it reads MAEMEKEGRPPENK. The segment at 1 to 26 is disordered; that stretch reads MAEMEKEGRPPENKRSRKPAHPVKRE. FCS-type zinc fingers lie at residues 142–180 and 216–256; these read DDVS…KCFA and FKNN…KCLN. Disordered stretches follow at residues 308–339, 413–484, and 550–646; these read RRKA…DTAN, RGPP…PGAP, and KPPN…PGVL. A compositionally biased stretch (polar residues) spans 318–339; it reads AGQSQGPGPSASTTVSPSDTAN. A compositionally biased stretch (low complexity) spans 417-433; sequence HHASNPNSPLSNPMLPG. Residues 460-484 show a composition bias toward pro residues; that stretch reads IHPPSTPTMPGNPPGLLPPPPPGAP. Positions 614-625 are enriched in basic and acidic residues; the sequence is EHGRSEVVDLTR. Positions 620–624 match the SUMO interaction motif 1 (SIM); mediates the binding to polysumoylated substrates motif; that stretch reads VVDLT. Ser629 bears the Phosphoserine mark. The SUMO interaction motif 2 (SIM); mediates the binding to polysumoylated substrates signature appears at 653 to 657; the sequence is VIDLT. Lys677 participates in a covalent cross-link: Glycyl lysine isopeptide (Lys-Gly) (interchain with G-Cter in SUMO2). Phosphoserine is present on Ser699. A disordered region spans residues 730–771; the sequence is AAAEGAKSAEPPPEQPPPPPPPAPPKKLLSPEEPAVSELESV. The segment covering 739–754 has biased composition (pro residues); the sequence is EPPPEQPPPPPPPAPP.

This sequence belongs to the SOBP family. Interacts (via SIM domains) with SUMO1 and SUMO2.

In terms of biological role, implicated in development of the cochlea. In Homo sapiens (Human), this protein is Sine oculis-binding protein homolog.